A 218-amino-acid polypeptide reads, in one-letter code: Protein-lysine N-methyltransferase M142.8 (218 aa).

This sequence belongs to the class I-like SAM-binding methyltransferase superfamily. EFM5 family.

The protein resides in the cytoplasm. Functionally, S-adenosyl-L-methionine-dependent protein-lysine N-methyltransferase that methylates elongation factor 1-alpha. In Caenorhabditis elegans, this protein is Protein-lysine N-methyltransferase M142.8.